Here is a 693-residue protein sequence, read N- to C-terminus: TBC1 domain family member 14 (693 aa).

Ser-91 carries the phosphoserine modification. Disordered stretches follow at residues Pro-108–Phe-130 and Asn-271–Leu-304. Residues Asn-271–Gly-288 are compositionally biased toward basic and acidic residues. Position 295 is a phosphoserine (Ser-295). In terms of domain architecture, Rab-GAP TBC spans Gly-401–Gly-611.

Interacts with ULK1. May interact with RAB11A and RAB11B, but does not exhibit any GTPase-activating activity toward these proteins. Interacts with TRAPPC8.

It localises to the golgi apparatus. Its subcellular location is the cis-Golgi network. It is found in the trans-Golgi network. Plays a role in the regulation of starvation-induced autophagosome formation. Together with the TRAPPIII complex, regulates a constitutive trafficking step from peripheral recycling endosomes to the early Golgi, maintaining the cycling pool of ATG9 required for initiation of autophagy. This Homo sapiens (Human) protein is TBC1 domain family member 14 (TBC1D14).